Consider the following 343-residue polypeptide: NADH-ubiquinone oxidoreductase chain 1 (343 aa).

The next 8 helical transmembrane spans lie at 4–24 (LISI…VAFL), 70–90 (ANII…LLGY), 106–126 (LGIL…LLAG), 154–174 (FYIL…IIES), 177–197 (VVYF…GCIA), 224–244 (VIFM…ICIL), 278–298 (GLSS…FIWV), and 316–336 (TILL…VIGL).

It belongs to the complex I subunit 1 family.

The protein resides in the mitochondrion inner membrane. The catalysed reaction is a ubiquinone + NADH + 5 H(+)(in) = a ubiquinol + NAD(+) + 4 H(+)(out). Core subunit of the mitochondrial membrane respiratory chain NADH dehydrogenase (Complex I) that is believed to belong to the minimal assembly required for catalysis. Complex I functions in the transfer of electrons from NADH to the respiratory chain. The immediate electron acceptor for the enzyme is believed to be ubiquinone. The chain is NADH-ubiquinone oxidoreductase chain 1 (ND1) from Trichophyton rubrum (Athlete's foot fungus).